The following is a 621-amino-acid chain: Rab proteins geranylgeranyltransferase component A 2 (621 aa).

Residues 113–171 (VQDTETLQRSSPLEASATPADSLDSASLPKERQSAYSTSYEVPSRHTEESDRELSLPSA) are disordered. Polar residues predominate over residues 115-125 (DTETLQRSSPL). A compositionally biased stretch (basic and acidic residues) spans 155-166 (PSRHTEESDREL).

It belongs to the Rab GDI family. In terms of assembly, monomer. Heterotrimer composed of RABGGTA, RABGGTB and CHML; within this trimer, RABGGTA and RABGGTB form the catalytic component B, while CHML (component A) mediates Rab protein binding. Interacts with RAB1A, RAB7A and RAB27A, but has much lower affinity for RAB1A, RAB7A and RAB27A than CHM. Interacts with the non-phosphorylated forms of RAB3A, RAB3B, RAB3C, RAB3D, RAB5B, RAB5C, RAB8A, RAB8B, RAB10, RAB12, RAB35, and RAB43.

The protein resides in the cytoplasm. Its subcellular location is the cytosol. Substrate-binding subunit (component A) of the Rab geranylgeranyltransferase (GGTase) complex. Binds unprenylated Rab proteins and presents the substrate peptide to the catalytic component B. The component A is thought to be regenerated by transferring its prenylated Rab back to the donor membrane. Less effective than CHM in supporting prenylation of Rab3 family. This is Rab proteins geranylgeranyltransferase component A 2 (Chml) from Mus musculus (Mouse).